The primary structure comprises 300 residues: uncharacterized protein (300 aa).

Solcar repeat units lie at residues 10–101 (ESQT…VKDF), 119–199 (GKAI…AKEY), and 212–294 (FQNF…LIPF). The next 6 membrane-spanning stretches (helical) occupy residues 16–36 (IVGS…VDTI), 70–86 (ATSL…YKIV), 121–141 (AIMH…LLPL), 178–198 (TAAR…FAKE), 215–235 (FFTS…LDVI), and 275–295 (LTTG…IPFF).

This sequence belongs to the mitochondrial carrier (TC 2.A.29) family.

It localises to the mitochondrion inner membrane. This is an uncharacterized protein from Schizosaccharomyces pombe (strain 972 / ATCC 24843) (Fission yeast).